A 342-amino-acid polypeptide reads, in one-letter code: Ribosomal RNA small subunit methyltransferase C (342 aa).

This sequence belongs to the methyltransferase superfamily. RsmC family. Monomer.

Its subcellular location is the cytoplasm. The enzyme catalyses guanosine(1207) in 16S rRNA + S-adenosyl-L-methionine = N(2)-methylguanosine(1207) in 16S rRNA + S-adenosyl-L-homocysteine + H(+). Specifically methylates the guanine in position 1207 of 16S rRNA in the 30S particle. In Salmonella typhi, this protein is Ribosomal RNA small subunit methyltransferase C.